We begin with the raw amino-acid sequence, 432 residues long: DNA damage-binding protein 2 (432 aa).

Positions 1–31 (MAPKKCPETQKSPDVAVLLRSKSRRGPQELE) are disordered. An N6-acetyllysine mark is found at lysine 35 and lysine 77. 2 required for interaction with DDB1 regions span residues 68–79 (SIVRDLYQHKLG) and 87–98 (QQGLQKSFLHSL). WD repeat units lie at residues 116–151 (SLAWHPTHPSTLAVGSKGGDIMIWNFGIKDKPIFLK), 159–194 (ITGLKFNHLNTNQFFASSMEGTTRLQDFKGNILRVY), 203–238 (WFCSLDVSAKSRVVVTGDNMGHVILLSTDGKELWNL), 244–287 (KVAH…SLPH), and 290–329 (PVNAACFSPDGARLLTTDQNNEIRVYSASQWDSPLNLISH). Residues 256-274 (WLLATASIDQTVKIWDLRQ) carry the DWD box motif. Residues 334–336 (FQH) are photolesion recognition. WD repeat units lie at residues 343–386 (TWHS…MCQL) and 396–420 (SLNEFNPMGDTLASTMGYHILIWSQ).

It belongs to the WD repeat DDB2/WDR76 family. In terms of assembly, component of the UV-DDB complex which includes DDB1 and DDB2. The UV-DDB complex interacts with monoubiquitinated histone H2A and binds to XPC via the DDB2 subunit. Component of the DCX (DDB1-CUL4-X-box) E3 ubiquitin-protein ligase complex DDB1-CUL4-ROC1 (also known as CUL4-DDB-ROC1 and CUL4-DDB-RBX1), which includes CUL4A or CUL4B, DDB1, DDB2 and RBX1. DDB2 may function as the substrate recognition module within this complex. The DDB1-CUL4-ROC1 complex may associate with the COP9 signalosome, and this inhibits the E3 ubiquitin-protein ligase activity of the complex. A large number of other DCX complexes may also exist in which an alternate substrate targeting subunit replaces DDB2. These targeting subunits are generally known as DCAF (DDB1- and CUL4-associated factor) or CDW (CUL4-DDB1-associated WD40-repeat) proteins. Post-translationally, phosphorylation by ABL1 negatively regulate UV-DDB activity. In terms of processing, ubiquitinated by CUL4A in response to UV irradiation. Ubiquitination appears to both impair DNA-binding and promotes ubiquitin-dependent proteolysis. Degradation of DDB2 at sites of DNA damage may be a prerequisite for their recognition by XPC and subsequent repair. CUL4A-mediated degradation appears to be promoted by ABL1. Ubiquitinated, leading to proteasomal degradation, and deubiquitinated by USP24. Deubiquitinated by USP44; leading to its stabilization on DNA lesions. Post-translationally, acetylated. Deacetylation by SIRT6 in response to UV stress facilitates nucleotide excision repair pathway (the NER pathway) transduction. Expressed in bone marrow, liver, lung, muscle, pancreas and spleen.

It is found in the nucleus. It localises to the chromosome. The protein operates within protein modification; protein ubiquitination. Its function is as follows. Protein, which is both involved in DNA repair and protein ubiquitination, as part of the UV-DDB complex and DCX (DDB1-CUL4-X-box) complexes, respectively. Core component of the UV-DDB complex (UV-damaged DNA-binding protein complex), a complex that recognizes UV-induced DNA damage and recruit proteins of the nucleotide excision repair pathway (the NER pathway) to initiate DNA repair. The UV-DDB complex preferentially binds to cyclobutane pyrimidine dimers (CPD), 6-4 photoproducts (6-4 PP), apurinic sites and short mismatches. Also functions as the substrate recognition module for the DCX (DDB2-CUL4-X-box) E3 ubiquitin-protein ligase complex DDB2-CUL4-ROC1 (also known as CUL4-DDB-ROC1 and CUL4-DDB-RBX1). The DDB2-CUL4-ROC1 complex may ubiquitinate histone H2A, histone H3 and histone H4 at sites of UV-induced DNA damage. The ubiquitination of histones may facilitate their removal from the nucleosome and promote subsequent DNA repair. The DDB2-CUL4-ROC1 complex also ubiquitinates XPC, which may enhance DNA-binding by XPC and promote NER. The DDB2-CUL4-ROC1 complex also ubiquitinates KAT7/HBO1 in response to DNA damage, leading to its degradation: recognizes KAT7/HBO1 following phosphorylation by ATR. This Mus musculus (Mouse) protein is DNA damage-binding protein 2 (Ddb2).